The chain runs to 78 residues: Translation initiation factor IF-1, chloroplastic (78 aa).

Residues 1–72 enclose the S1-like domain; sequence MEKQNLIDME…TKGRITYRLR (72 aa).

The protein belongs to the IF-1 family. In terms of assembly, component of the 30S ribosomal translation pre-initiation complex which assembles on the 30S ribosome in the order IF-2 and IF-3, IF-1 and N-formylmethionyl-tRNA(fMet); mRNA recruitment can occur at any time during PIC assembly.

The protein localises to the plastid. It is found in the chloroplast. In terms of biological role, one of the essential components for the initiation of protein synthesis. Stabilizes the binding of IF-2 and IF-3 on the 30S subunit to which N-formylmethionyl-tRNA(fMet) subsequently binds. Helps modulate mRNA selection, yielding the 30S pre-initiation complex (PIC). Upon addition of the 50S ribosomal subunit IF-1, IF-2 and IF-3 are released leaving the mature 70S translation initiation complex. The polypeptide is Translation initiation factor IF-1, chloroplastic (Anthoceros angustus (Hornwort)).